The sequence spans 77 residues: MKEQKLIHEGLITESLPNGMFWVRLDNEDLVLGYISGRIRRSSIRILPGDRVKIEVSRYDSTRGRIIYRLRNKDSNE.

In terms of domain architecture, S1-like spans 1–71 (MKEQKLIHEG…TRGRIIYRLR (71 aa)).

This sequence belongs to the IF-1 family. Component of the 30S ribosomal translation pre-initiation complex which assembles on the 30S ribosome in the order IF-2 and IF-3, IF-1 and N-formylmethionyl-tRNA(fMet); mRNA recruitment can occur at any time during PIC assembly.

The protein resides in the plastid. The protein localises to the chloroplast. One of the essential components for the initiation of protein synthesis. Stabilizes the binding of IF-2 and IF-3 on the 30S subunit to which N-formylmethionyl-tRNA(fMet) subsequently binds. Helps modulate mRNA selection, yielding the 30S pre-initiation complex (PIC). Upon addition of the 50S ribosomal subunit IF-1, IF-2 and IF-3 are released leaving the mature 70S translation initiation complex. The polypeptide is Translation initiation factor IF-1, chloroplastic (Acorus calamus var. americanus (American sweet flag)).